Consider the following 296-residue polypeptide: MIFAKGHGTQNDFVVLPDVEADVTFTAAQVAALCNRRQGLGADGVLRVTTAGAAVTAGVLEHLPDGVSCSDWYMDYRNADGSVAQMCGNGVRVFAHYLRASGLESCDEFVVGSLAGPRLVNVHHVDELNADVTVDMGKANLLGSGGPAFAVTVGGRRFSGVAVDVGNPHLACMDPQLSLEELAALDLGAPVHLDRVQFPDGVNIEVLTAPVDGMVQMRVHERGVGETRSCGTGTVAAAVAALASAGADTGTLTVRVPGGDVVITITDVTSYLRGPSVLVAHGELADAWWYSLARSC.

The substrate site is built by Asn11 and Asn78. The active-site Proton donor is Cys87. Residues Gly88–Asn89, Asn167, Asn203, and Glu221–Arg222 contribute to the substrate site. Cys230 acts as the Proton acceptor in catalysis. Substrate is bound at residue Gly231–Thr232.

The protein belongs to the diaminopimelate epimerase family. In terms of assembly, homodimer.

Its subcellular location is the cytoplasm. The catalysed reaction is (2S,6S)-2,6-diaminopimelate = meso-2,6-diaminopimelate. The protein operates within amino-acid biosynthesis; L-lysine biosynthesis via DAP pathway; DL-2,6-diaminopimelate from LL-2,6-diaminopimelate: step 1/1. Its function is as follows. Catalyzes the stereoinversion of LL-2,6-diaminopimelate (L,L-DAP) to meso-diaminopimelate (meso-DAP), a precursor of L-lysine and an essential component of the bacterial peptidoglycan. The polypeptide is Diaminopimelate epimerase (Mycobacterium leprae (strain Br4923)).